Consider the following 252-residue polypeptide: Triosephosphate isomerase (252 aa).

10 to 12 (NWK) contributes to the substrate binding site. His-96 acts as the Electrophile in catalysis. Glu-168 serves as the catalytic Proton acceptor. Substrate-binding positions include Gly-174, Ser-214, and 235–236 (GG).

The protein belongs to the triosephosphate isomerase family. In terms of assembly, homodimer.

The protein resides in the cytoplasm. It catalyses the reaction D-glyceraldehyde 3-phosphate = dihydroxyacetone phosphate. It functions in the pathway carbohydrate biosynthesis; gluconeogenesis. It participates in carbohydrate degradation; glycolysis; D-glyceraldehyde 3-phosphate from glycerone phosphate: step 1/1. Involved in the gluconeogenesis. Catalyzes stereospecifically the conversion of dihydroxyacetone phosphate (DHAP) to D-glyceraldehyde-3-phosphate (G3P). The sequence is that of Triosephosphate isomerase from Streptococcus thermophilus (strain CNRZ 1066).